The chain runs to 653 residues: Rab11 family-interacting protein 5 (653 aa).

The region spanning 5-146 (RGAEPAAGPS…AGRAQHTQWY (142 aa)) is the C2 domain. Residues serine 176, serine 283, serine 286, serine 307, serine 357, and serine 367 each carry the phosphoserine modification. Positions 269-300 (GPGAELLTRSPSRSSWLSTEGGRDSAQSPKLF) are disordered. The span at 277–286 (RSPSRSSWLS) shows a compositional bias: polar residues. Disordered regions lie at residues 342–402 (HIYN…AVLG) and 415–548 (PGAS…RSSL). A compositionally biased stretch (low complexity) spans 357–368 (SISGSLPSSGSL). The span at 375–387 (FSEEGPRSTDDTW) shows a compositional bias: basic and acidic residues. A phosphoserine mark is found at serine 391 and serine 395. 2 stretches are compositionally biased toward basic and acidic residues: residues 420–430 (PGEEEGARLPE) and 447–460 (VAEK…ERKP). Residues serine 494, serine 538, serine 547, and serine 553 each carry the phosphoserine modification. The FIP-RBD domain maps to 586 to 648 (KDSAVLDQSA…ETSPTLLQIP (63 aa)).

In terms of assembly, interacts with RAB11FIP4. Interacts with NAPG. Interacts with RO60. Interacts with RAB11A that has been activated by GTP binding. As to quaternary structure, (Microbial infection) Interacts with Kaposi's sarcoma-associated herpesvirus/HHV-8 protein ORF45; this interaction results in the lysosomal degradation of ORF45 and the inhibition of viral particle release. In terms of processing, phosphorylated on serine and threonine residues. Phosphorylation at Ser-357 is PKA-dependent. Detected at low levels in heart, brain, placenta, lung, liver, adipocytes, kidney, spleen, skeletal muscle and pancreas.

The protein localises to the cytoplasm. Its subcellular location is the recycling endosome membrane. It localises to the early endosome membrane. The protein resides in the golgi apparatus membrane. It is found in the cytoplasmic vesicle. The protein localises to the secretory vesicle membrane. Its subcellular location is the mitochondrion membrane. Its function is as follows. Rab effector involved in protein trafficking from apical recycling endosomes to the apical plasma membrane. Involved in insulin granule exocytosis. May regulate V-ATPase intracellular transport in response to extracellular acidosis. The protein is Rab11 family-interacting protein 5 of Homo sapiens (Human).